The chain runs to 71 residues: uncharacterized protein (71 aa).

The segment at 1–71 is disordered; the sequence is MLFETLKSLS…AFFSRPFYSE (71 aa). A compositionally biased stretch (polar residues) spans 7 to 33; it reads KSLSQQNGGQFSDEQSFESPISSSFNG. Positions 35–65 are enriched in low complexity; it reads SMPFGSPSSTMSSSYKGNTNSSTKSSSAFFS.

This is an uncharacterized protein from Dictyostelium discoideum (Social amoeba).